A 543-amino-acid polypeptide reads, in one-letter code: Hydroxylamine reductase (543 aa).

4 residues coordinate [4Fe-4S] cluster: C5, C8, C17, and C23. Positions 236, 260, 304, 398, 426, 451, 486, and 488 each coordinate hybrid [4Fe-2O-2S] cluster. The residue at position 398 (C398) is a Cysteine persulfide.

This sequence belongs to the HCP family. [4Fe-4S] cluster serves as cofactor. It depends on hybrid [4Fe-2O-2S] cluster as a cofactor.

The protein localises to the cytoplasm. The enzyme catalyses A + NH4(+) + H2O = hydroxylamine + AH2 + H(+). In terms of biological role, catalyzes the reduction of hydroxylamine to form NH(3) and H(2)O. The polypeptide is Hydroxylamine reductase (Bacteroides fragilis (strain ATCC 25285 / DSM 2151 / CCUG 4856 / JCM 11019 / LMG 10263 / NCTC 9343 / Onslow / VPI 2553 / EN-2)).